A 147-amino-acid chain; its full sequence is NADH-quinone oxidoreductase subunit A (147 aa).

The next 3 membrane-spanning stretches (helical) occupy residues 16–36 (FAIF…GGWF), 68–88 (FYLV…LFAW), and 98–118 (VGFV…VYLV).

It belongs to the complex I subunit 3 family. NDH-1 is composed of 13 different subunits. Subunits NuoA, H, J, K, L, M, N constitute the membrane sector of the complex.

It localises to the cell inner membrane. The catalysed reaction is a quinone + NADH + 5 H(+)(in) = a quinol + NAD(+) + 4 H(+)(out). NDH-1 shuttles electrons from NADH, via FMN and iron-sulfur (Fe-S) centers, to quinones in the respiratory chain. The immediate electron acceptor for the enzyme in this species is believed to be ubiquinone. Couples the redox reaction to proton translocation (for every two electrons transferred, four hydrogen ions are translocated across the cytoplasmic membrane), and thus conserves the redox energy in a proton gradient. In Shigella boydii serotype 18 (strain CDC 3083-94 / BS512), this protein is NADH-quinone oxidoreductase subunit A.